A 344-amino-acid chain; its full sequence is Biotin synthase (344 aa).

In terms of domain architecture, Radical SAM core spans 40 to 267 (AEVQVSTLLS…KSMVRLSAGR (228 aa)). Positions 55, 59, and 62 each coordinate [4Fe-4S] cluster. [2Fe-2S] cluster contacts are provided by Cys-99, Cys-130, Cys-190, and Arg-262.

Belongs to the radical SAM superfamily. Biotin synthase family. As to quaternary structure, homodimer. The cofactor is [4Fe-4S] cluster. It depends on [2Fe-2S] cluster as a cofactor.

It carries out the reaction (4R,5S)-dethiobiotin + (sulfur carrier)-SH + 2 reduced [2Fe-2S]-[ferredoxin] + 2 S-adenosyl-L-methionine = (sulfur carrier)-H + biotin + 2 5'-deoxyadenosine + 2 L-methionine + 2 oxidized [2Fe-2S]-[ferredoxin]. The protein operates within cofactor biosynthesis; biotin biosynthesis; biotin from 7,8-diaminononanoate: step 2/2. Catalyzes the conversion of dethiobiotin (DTB) to biotin by the insertion of a sulfur atom into dethiobiotin via a radical-based mechanism. In Xanthomonas oryzae pv. oryzae (strain PXO99A), this protein is Biotin synthase.